We begin with the raw amino-acid sequence, 360 residues long: MEDFNMESDSFEDFWKGEDLSNYSYSSTLPPFLLDAAPCEPESLEINKYFVVIIYALVFLLSLLGNSLVMLVILYSRVGRSVTDVYLLNLALADLLFALTLPIWAASKVNGWIFGTFLCKVVSLLKEVNFYSGILLLACISVDRYLAIVHATRTLTQKRYLVKFICLSIWGLSLLLALPVLLFRRTVYSSNVSPACYEDMGNNTANWRMLLRILPQSFGFIVPLLIMLFCYGFTLRTLFKAHMGQKHRAMRVIFAVVLIFLLCWLPYNLVLLADTLMRTQVIQETCERRNHIDRALDATEILGILHSCLNPLIYAFIGQKFRHGLLKILAIHGLISKDSLPKDSRPSFVGSSSGHTSTTL.

Topologically, residues 1 to 48 (MEDFNMESDSFEDFWKGEDLSNYSYSSTLPPFLLDAAPCEPESLEINK) are extracellular. N-linked (GlcNAc...) asparagine glycosylation occurs at N22. The helical transmembrane segment at 49 to 75 (YFVVIIYALVFLLSLLGNSLVMLVILY) threads the bilayer. Residues 76 to 84 (SRVGRSVTD) are Cytoplasmic-facing. The chain crosses the membrane as a helical span at residues 85–105 (VYLLNLALADLLFALTLPIWA). Over 106 to 120 (ASKVNGWIFGTFLCK) the chain is Extracellular. A disulfide bridge connects residues C119 and C196. Residues 121–142 (VVSLLKEVNFYSGILLLACISV) form a helical membrane-spanning segment. At 143-163 (DRYLAIVHATRTLTQKRYLVK) the chain is on the cytoplasmic side. Residues 164–183 (FICLSIWGLSLLLALPVLLF) form a helical membrane-spanning segment. Residues 184–208 (RRTVYSSNVSPACYEDMGNNTANWR) are Extracellular-facing. The chain crosses the membrane as a helical span at residues 209–231 (MLLRILPQSFGFIVPLLIMLFCY). The Cytoplasmic segment spans residues 232-251 (GFTLRTLFKAHMGQKHRAMR). A helical membrane pass occupies residues 252–273 (VIFAVVLIFLLCWLPYNLVLLA). Over 274 to 294 (DTLMRTQVIQETCERRNHIDR) the chain is Extracellular. A helical membrane pass occupies residues 295 to 315 (ALDATEILGILHSCLNPLIYA). The Cytoplasmic portion of the chain corresponds to 316 to 360 (FIGQKFRHGLLKILAIHGLISKDSLPKDSRPSFVGSSSGHTSTTL). Phosphoserine occurs at positions 347, 351, 352, and 353.

Belongs to the G-protein coupled receptor 1 family. Interacts with IL8. Interacts with GNAI2. Phosphorylated upon ligand binding; which is required for desensitization. Post-translationally, (Microbial infection) Proteolytically cleaved by Staphylococcus aureus staphopain A/SspP. This cleavage inhibits CXCR2-dependent neutrophil activation and chemotaxis.

The protein resides in the cell membrane. In terms of biological role, receptor for interleukin-8 which is a powerful neutrophil chemotactic factor. Binding of IL-8 to the receptor causes activation of neutrophils. This response is mediated via a G-protein that activates a phosphatidylinositol-calcium second messenger system. Binds to IL-8 with high affinity. Also binds with high affinity to CXCL3, GRO/MGSA and NAP-2. This chain is C-X-C chemokine receptor type 2 (CXCR2), found in Homo sapiens (Human).